Reading from the N-terminus, the 443-residue chain is Protein AknT (443 aa).

Belongs to the cytochrome P450 family.

Involved in the biosynthesis of the anthracycline antitumor agent aclacinomycin A. AknT is required for the glycosylation of aklavinone aglycone by AknS to yield aclacinomycin T (rhodosaminyl-aklavinone). The polypeptide is Protein AknT (Streptomyces galilaeus).